The following is a 340-amino-acid chain: NADH-quinone oxidoreductase subunit H (340 aa).

The next 8 membrane-spanning stretches (helical) occupy residues 4–24 (TIGILIWIIIKILVIVVPLLL), 78–98 (YLFVIAPLFALVPSLVGWAVI), 113–133 (VLYLFAMSSLGVYGVLIAGWA), 151–171 (VSYEIAMGFALVGVLLAAGSM), 184–204 (MLHWWFIPLLPLFLVFWIAGI), 244–264 (SMILISTFMAILFMGGWLSPF), 273–293 (IFFVVPGFVWLLLKISFFLFV), and 316–336 (VLIPVTIVWLVVTSLMVVAHV).

The protein belongs to the complex I subunit 1 family. As to quaternary structure, NDH-1 is composed of 14 different subunits. Subunits NuoA, H, J, K, L, M, N constitute the membrane sector of the complex.

It localises to the cell inner membrane. It catalyses the reaction a quinone + NADH + 5 H(+)(in) = a quinol + NAD(+) + 4 H(+)(out). Functionally, NDH-1 shuttles electrons from NADH, via FMN and iron-sulfur (Fe-S) centers, to quinones in the respiratory chain. The immediate electron acceptor for the enzyme in this species is believed to be ubiquinone. Couples the redox reaction to proton translocation (for every two electrons transferred, four hydrogen ions are translocated across the cytoplasmic membrane), and thus conserves the redox energy in a proton gradient. This subunit may bind ubiquinone. The protein is NADH-quinone oxidoreductase subunit H of Legionella pneumophila (strain Paris).